The primary structure comprises 906 residues: MCRKEPFLLPTALCILAALVLHQGPVEALGGSRLCKTGFLEDVYHASVYRSVHEGQPLLNVKFTDCGADRRIHYETSNPTDFRIDGDGIVCASRTFDISPEQAEFLVYAQDEDTRELWHVTVKITLRPRHVQDLHQGFHKVREIKFSTQRKHNGLQRQKRDWVIPPINVPENARGTFPQELVGIRSDRDKSLSLRYSVTGPGADQPPLGVFIINPISGQLSVTKPLDREQIATFHLRAHAVDVNGNQVENPIDIVINVIDMNDNRPEFLHQIWNGTIPEGSKPGTYVMTVTAIDGDDPKQPNGMLRYKILSQTPASSSPNMFTINNETGDIITLAAGLDREKVQRYTLIIQATDMEGNPTYGLSNTATAVIAVTDVNDNPPEFTAMTFYGEVPENRVDVVVANLTVTDKDQPHTPAWNAVYRIVGGDGTGRFAIKTDANSNDGLVTVVKPIDYETKSTYILTVVAENQVELIRGIQYKPESTATVSVTIIDVNENPYFTPNPKLIRQEEGLFAGKLLTTFSAQDPDRYMQQTIRYSKLSDPANWLKIDPVNGFITTTAVLDRESIYVKNNMYNATFLATDSGIPPMSGTGTLQIYLLDINDNAPYVYPQEVEICDRPDPNAINITALDADINPNAGPFIFELPYSPMDIKKNWTVTRLSGDHAQLSLKIGSLDYGIYNIPIQITDSGNPAMSNTSYLRVKVCSCEHGYCSTTAPIIGTGLGTGAIIAILLCIIILLTLVLMFVVWMKRRDKERQAKQLLIDPEDDVRDNILKYDEEGGGEEDQDYDLSQLQQPDTVEPDTIKPVGIRRMDERPIHAEPQYPIRSAAPHPGDIGDFINEGLKAADNDPTAPPYDSLLVFDYEGSGSTAGSLSSLNSSSSGGEQDYDYLNDWGPRFKKLADMYGGSDD.

Positions 1–28 (MCRKEPFLLPTALCILAALVLHQGPVEA) are cleaved as a signal peptide. A propeptide spanning residues 29 to 160 (LGGSRLCKTG…KHNGLQRQKR (132 aa)) is cleaved from the precursor. 5 Cadherin domains span residues 161 to 268 (DWVI…RPEF), 269 to 383 (LHQI…PPEF), 384 to 498 (TAMT…NPYF), 499 to 604 (TPNP…DNAP), and 605 to 714 (YVYP…TTAP). Residues 161-724 (DWVIPPINVP…IIGTGLGTGA (564 aa)) lie on the Extracellular side of the membrane. Positions 171, 227, 229, 260, 261, 262, 263, and 264 each coordinate Ca(2+). N274 carries N-linked (GlcNAc...) asparagine glycosylation. Residues D294, D296, and N302 each contribute to the Ca(2+) site. N-linked (GlcNAc...) asparagine glycosylation is present at N326. D354 serves as a coordination point for Ca(2+). N-linked (GlcNAc...) asparagine glycans are attached at residues N403, N573, N623, N652, and N693. The chain crosses the membrane as a helical span at residues 725-746 (IIAILLCIIILLTLVLMFVVWM). Topologically, residues 747–906 (KRRDKERQAK…LADMYGGSDD (160 aa)) are cytoplasmic. 2 disordered regions span residues 775–800 (EEGG…EPDT) and 863–884 (SGST…EQDY). Positions 776-785 (EGGGEEDQDY) are enriched in acidic residues. A compositionally biased stretch (low complexity) spans 863–880 (SGSTAGSLSSLNSSSSGG).

In terms of assembly, homodimer (via extracellular region). Can also form heterodimers with other cadherins (via extracellular region). Dimerization occurs in trans, i.e. with a cadherin chain from another cell.

It is found in the cell membrane. The protein resides in the sarcolemma. It localises to the cell junction. The protein localises to the cell surface. Its subcellular location is the desmosome. It is found in the adherens junction. Its function is as follows. Calcium-dependent cell adhesion protein; preferentially mediates homotypic cell-cell adhesion. Cadherins may thus contribute to the sorting of heterogeneous cell types, and thereby play an important role during embryonic development. Required for proper neurite branching. Required for pre- and postsynaptic organization. The polypeptide is Cadherin-2A (cdh2-a) (Xenopus laevis (African clawed frog)).